Here is a 39-residue protein sequence, read N- to C-terminus: Antimicrobial peptide CHP1 (39 aa).

3 cysteine pairs are disulfide-bonded: cysteine 6–cysteine 28, cysteine 13–cysteine 34, and cysteine 18–cysteine 35.

Functionally, bactericidal activity; inhibits S.aureus and E.coli. This is Antimicrobial peptide CHP1 from Gallus gallus (Chicken).